The chain runs to 206 residues: Large ribosomal subunit protein uL4 (206 aa).

A compositionally biased stretch (basic residues) spans 65-76 (KQKGTGRARHSS). The segment at 65 to 94 (KQKGTGRARHSSARAPQFRGGGKAHGPVVR) is disordered.

The protein belongs to the universal ribosomal protein uL4 family. Part of the 50S ribosomal subunit.

Its function is as follows. One of the primary rRNA binding proteins, this protein initially binds near the 5'-end of the 23S rRNA. It is important during the early stages of 50S assembly. It makes multiple contacts with different domains of the 23S rRNA in the assembled 50S subunit and ribosome. Functionally, forms part of the polypeptide exit tunnel. This is Large ribosomal subunit protein uL4 from Bartonella quintana (strain Toulouse) (Rochalimaea quintana).